A 2571-amino-acid polypeptide reads, in one-letter code: Highly reducing polyketide synthase 19 (2571 aa).

Residues 1-51 form a disordered region; sequence MSPIFLGDSEDAATCRCGPPSSPSPELSGTETALTSDSDGPELLNPGPQGP. Positions 27–38 are enriched in polar residues; that stretch reads LSGTETALTSDS. The Ketosynthase family 3 (KS3) domain maps to 51 to 485; sequence PEPIAIIGMG…GANAHCILES (435 aa). Active-site for beta-ketoacyl synthase activity residues include Cys-224, His-359, and His-398. Positions 609 to 932 are malonyl-CoA:ACP transacylase (MAT) domain; it reads VFTGQGAQWA…PYNSALLRGK (324 aa). The active-site For malonyltransferase activity is Ser-701. The N-terminal hotdog fold stretch occupies residues 1019–1163; the sequence is HDLLGSRVPG…GLVKLTQNED (145 aa). The segment at 1019-1340 is dehydratase (DH) domain; it reads HDLLGSRVPG…SGCRMVPYSS (322 aa). In terms of domain architecture, PKS/mFAS DH spans 1019 to 1344; sequence HDLLGSRVPG…MVPYSSGTAV (326 aa). His-1051 acts as the Proton acceptor; for dehydratase activity in catalysis. The segment at 1177 to 1344 is C-terminal hotdog fold; the sequence is MEQSAPRTWY…MVPYSSGTAV (168 aa). Residue Asp-1241 is the Proton donor; for dehydratase activity of the active site. The enoyl reductase (ER) domain stretch occupies residues 1800-2140; that stretch reads NMSDAFVFTR…AFRALSGSTT (341 aa). The segment at 2177–2355 is ketoreductase (KR) domain; the sequence is SYLLVGCLGG…ATSVGLGMIS (179 aa). In terms of domain architecture, Carrier spans 2490–2568; sequence AVAAQALELV…MLSELIAGKL (79 aa). Ser-2527 carries the post-translational modification O-(pantetheine 4'-phosphoryl)serine.

It participates in polyketide biosynthesis. In terms of biological role, highly reducing polyketide synthase; part of the gene cluster that mediates the biosynthesis of pyriculol and pyriculariol, two heptaketides that induce lesion formation upon application on rice leaves but are dispensable for pathogenicity. The highly reducing polyketide synthase synthesizes the heptaketide backbone of pyriculol and pyriculariol. Pyriculol and pyriculariol contain several hydroxyl moieties and double bonds, so it can be assumed that several reduction steps occur during biosynthesis. These reactions could be executed by PKS19 itself or partly by the tailoring enzymes OXR1, PXR2, RED1, RED2 or RED3, identified within the cluster. The FAD-linked oxidoreductase OXR1 is the only tailoring enzyme for which the function has been determined yet, and is involved in the oxidation of dihydropyriculol and dihydropyriculariol into pyriculol and pyriculariol, respectively. This Pyricularia oryzae (strain 70-15 / ATCC MYA-4617 / FGSC 8958) (Rice blast fungus) protein is Highly reducing polyketide synthase 19.